Consider the following 356-residue polypeptide: Ferrochelatase (356 aa).

Fe cation is bound by residues histidine 214 and glutamate 295.

This sequence belongs to the ferrochelatase family.

The protein resides in the cytoplasm. It carries out the reaction heme b + 2 H(+) = protoporphyrin IX + Fe(2+). It functions in the pathway porphyrin-containing compound metabolism; protoheme biosynthesis; protoheme from protoporphyrin-IX: step 1/1. Catalyzes the ferrous insertion into protoporphyrin IX. In Paraburkholderia phymatum (strain DSM 17167 / CIP 108236 / LMG 21445 / STM815) (Burkholderia phymatum), this protein is Ferrochelatase.